The primary structure comprises 133 residues: Rodlin protein RdlB (133 aa).

The signal sequence occupies residues 1 to 28; it reads MIKKVVAYAAIAASVMGASAAAAPQAMA. Amyloid-forming regions lie at residues 45–57 and 59–70; these read QYFGNSMTTGNMS and QMALIQGSFNKP. The required for amyloid formation stretch occupies residues 45-70; that stretch reads QYFGNSMTTGNMSPQMALIQGSFNKP.

It belongs to the rodlin family.

Its subcellular location is the secreted. It is found in the cell wall. The protein localises to the spore wall. Forms part of the rodlet layer on the spore surface; despite their high similarity both RdlA and RdlB are required for rodlet formation. Plays a role in cell adhesion to polystyrene plates. Forms amyloid-like fibrils in vitro composed of stacked beta-sheets. The protein is Rodlin protein RdlB of Streptomyces coelicolor (strain ATCC BAA-471 / A3(2) / M145).